Here is a 273-residue protein sequence, read N- to C-terminus: Rho GTPase-activating protein gacB (273 aa).

One can recognise a Rho-GAP domain in the interval 1–192; it reads MTDQTLRLEN…YLISHFNEIF (192 aa).

It localises to the cytoplasm. Rho GTPase-activating protein involved in the signal transduction pathway. The protein is Rho GTPase-activating protein gacB (gacB) of Dictyostelium discoideum (Social amoeba).